The primary structure comprises 372 residues: Septin-1 (372 aa).

The Septin-type G domain occupies 27–301 (KGFDFTLMVA…EGYRARCLQS (275 aa)). The segment at 37-44 (GESGLGKS) is G1 motif. GTP contacts are provided by residues 37–44 (GESGLGKS), threonine 71, glycine 97, and 176–184 (KADALMPQE). Residues 94-97 (DTPG) are G3 motif. Residues 175–178 (GKAD) are G4 motif. Serine 211 bears the Phosphoserine mark. Residues glycine 234 and arginine 250 each coordinate GTP. Serine 253 carries the phosphoserine; by AURKB modification. At threonine 256 the chain carries Phosphothreonine. 2 positions are modified to phosphoserine; by AURKB: serine 312 and serine 320. Residues 352–372 (LEKMQAQMQQSQAQGEQSDAL) are disordered. Residues 355–372 (MQAQMQQSQAQGEQSDAL) are compositionally biased toward low complexity.

The protein belongs to the TRAFAC class TrmE-Era-EngA-EngB-Septin-like GTPase superfamily. Septin GTPase family. In terms of assembly, septins polymerize into heterooligomeric protein complexes that form filaments, and can associate with cellular membranes, actin filaments and microtubules. GTPase activity is required for filament formation. Interacts with AURKB. As to expression, expressed at high levels in lymphoid and hematopoietic tissues.

It is found in the cytoplasm. Its subcellular location is the cytoskeleton. The protein resides in the microtubule organizing center. It localises to the centrosome. The protein localises to the midbody. In terms of biological role, filament-forming cytoskeletal GTPase. May play a role in cytokinesis (Potential). The chain is Septin-1 from Homo sapiens (Human).